Consider the following 900-residue polypeptide: Zinc finger protein 62 homolog (900 aa).

The segment at 1 to 97 (MSHLKTSTED…EASEKSLHLS (97 aa)) is disordered. Residue lysine 5 forms a Glycyl lysine isopeptide (Lys-Gly) (interchain with G-Cter in SUMO2) linkage. Positions 9–18 (EDEEPTEEYE) are enriched in acidic residues. The segment covering 47 to 73 (SKVENQQKKPVENRMKEDKSSIREAIS) has biased composition (basic and acidic residues). Residues lysine 48, lysine 62, lysine 65, lysine 82, and lysine 92 each participate in a glycyl lysine isopeptide (Lys-Gly) (interchain with G-Cter in SUMO2) cross-link. Residues 83–94 (TEQEGEASEKSL) show a composition bias toward basic and acidic residues. 13 C2H2-type zinc fingers span residues 225–247 (CKCDECGKSFNYSSVLDQHKRIH), 253–275 (YECGECGKAFRNSSGLRVHKRIH), 281–303 (YECDICGKTFSNSSGLRVHKRIH), 309–331 (YECDECGKAFITCRTLLNHKSIH), 337–359 (YKCDECEKSFNYSSLLIQHKVIH), 365–387 (YECDECGKAFRNSSGLIVHKRIH), 393–415 (YKCDVCGKAFSYSSGLAVHKSIH), 421–443 (HECKECGKSFSYNSLLLQHRTIH), 449–471 (YVCDVCGKTFRNNAGLKVHRRLH), 477–499 (YKCDVCGKAYISRSSLKNHKGIH), 505–527 (YKCSYCEKSFNYSSALEQHKRIH), 533–555 (FGCDECGKAFRNNSGLKVHKRIH), and 561–583 (YKCEECGKAYISLSSLINHKSVH). Lysine 587 is covalently cross-linked (Glycyl lysine isopeptide (Lys-Gly) (interchain with G-Cter in SUMO2)). 10 C2H2-type zinc fingers span residues 589–611 (FKCDECEKAFITYRTLTNHKKVH), 617–639 (YKCDVCEKSFNYTSLLSQHRRVH), 645–667 (YECDRCEKVFRNNSSLKVHKRIH), 673–695 (YECDVCGKAYISHSSLINHKSTH), 701–723 (HTCDECGKAFFSSRTLISHKRVH), 729–751 (FKCVECGKSFSYSSLLSQHKRIH), 757–779 (YVCDRCGKAFRNSSGLTVHKRIH), 785–807 (YECDECGKAYISHSSLINHKSVH), 813–834 (YNCECGKSFNYRSVLDQHKRIH), and 840–862 (YRCNECGKAFNIRSNLTKHKRTH). Lysine 748 participates in a covalent cross-link: Glycyl lysine isopeptide (Lys-Gly) (interchain with G-Cter in SUMO2). Lysine 882 participates in a covalent cross-link: Glycyl lysine isopeptide (Lys-Gly) (interchain with G-Cter in SUMO2).

This sequence belongs to the krueppel C2H2-type zinc-finger protein family.

The protein localises to the nucleus. In terms of biological role, may play a role in differentiating skeletal muscle. In Homo sapiens (Human), this protein is Zinc finger protein 62 homolog (ZFP62).